Here is a 288-residue protein sequence, read N- to C-terminus: Small ribosomal subunit protein uS3 (288 aa).

Positions 38 to 106 (IRRMMSKGLE…QVQLNIIEVK (69 aa)) constitute a KH type-2 domain. The disordered stretch occupies residues 209–288 (PGRETPAEAP…TQPAETQQEG (80 aa)). Positions 219 to 232 (SRPRRERGDRSERP) are enriched in basic and acidic residues. A compositionally biased stretch (low complexity) spans 249–264 (AGRAAATTIAQAAETP). Residues 277–288 (AATQPAETQQEG) show a composition bias toward polar residues.

This sequence belongs to the universal ribosomal protein uS3 family. As to quaternary structure, part of the 30S ribosomal subunit. Forms a tight complex with proteins S10 and S14.

Functionally, binds the lower part of the 30S subunit head. Binds mRNA in the 70S ribosome, positioning it for translation. The chain is Small ribosomal subunit protein uS3 from Salinispora arenicola (strain CNS-205).